Consider the following 180-residue polypeptide: Acireductone dioxygenase (180 aa).

Fe(2+) is bound by residues His99, His101, Glu105, and His145. Ni(2+) contacts are provided by His99, His101, Glu105, and His145.

Belongs to the acireductone dioxygenase (ARD) family. As to quaternary structure, monomer. Fe(2+) serves as cofactor. Requires Ni(2+) as cofactor.

The enzyme catalyses 1,2-dihydroxy-5-(methylsulfanyl)pent-1-en-3-one + O2 = 3-(methylsulfanyl)propanoate + CO + formate + 2 H(+). It carries out the reaction 1,2-dihydroxy-5-(methylsulfanyl)pent-1-en-3-one + O2 = 4-methylsulfanyl-2-oxobutanoate + formate + 2 H(+). It participates in amino-acid biosynthesis; L-methionine biosynthesis via salvage pathway; L-methionine from S-methyl-5-thio-alpha-D-ribose 1-phosphate: step 5/6. Its function is as follows. Catalyzes 2 different reactions between oxygen and the acireductone 1,2-dihydroxy-3-keto-5-methylthiopentene (DHK-MTPene) depending upon the metal bound in the active site. Fe-containing acireductone dioxygenase (Fe-ARD) produces formate and 2-keto-4-methylthiobutyrate (KMTB), the alpha-ketoacid precursor of methionine in the methionine recycle pathway. Ni-containing acireductone dioxygenase (Ni-ARD) produces methylthiopropionate, carbon monoxide and formate, and does not lie on the methionine recycle pathway. This Geobacillus kaustophilus (strain HTA426) protein is Acireductone dioxygenase.